Reading from the N-terminus, the 102-residue chain is ATP-dependent Clp protease adapter protein ClpS (102 aa).

The protein belongs to the ClpS family. As to quaternary structure, binds to the N-terminal domain of the chaperone ClpA.

In terms of biological role, involved in the modulation of the specificity of the ClpAP-mediated ATP-dependent protein degradation. The polypeptide is ATP-dependent Clp protease adapter protein ClpS (Shewanella baltica (strain OS155 / ATCC BAA-1091)).